We begin with the raw amino-acid sequence, 158 residues long: Snaclec stejaggregin-A subunit alpha (158 aa).

An N-terminal signal peptide occupies residues 1 to 23; the sequence is MGRFISVSFGLLVVFLSLSGTGA. Disulfide bonds link C27–C38, C55–C152, and C127–C144. The 120-residue stretch at 34–153 folds into the C-type lectin domain; sequence YDWYCYKPFN…CQAKNPFVCK (120 aa).

This sequence belongs to the snaclec family. Heteromultimer; disulfide-linked. As to expression, expressed by the venom gland.

The protein resides in the secreted. In terms of biological role, interferes with one step of hemostasis (modulation of platelet aggregation, or coagulation cascade, for example). This is Snaclec stejaggregin-A subunit alpha from Trimeresurus stejnegeri (Chinese green tree viper).